A 413-amino-acid chain; its full sequence is MTPSISWGLLLLAGLCCLVPSFLAEDVQETDTSQKDQSPASHEIATNLGDFAISLYRELVHQSNTSNIFFSPVSIATAFAMLSLGSKGDTHTQILEGLQFNLTQTSEADIHKSFQHLLQTLNRPDSELQLSTGNGLFVNNDLKLVEKFLEEAKNHYQAEVFSVNFAESEEAKKVINDFVEKGTQGKIAEAVKKLDQDTVFALANYILFKGKWKKPFDPENTEEAEFHVDESTTVKVPMMTLSGMLHVHHCSTLSSWVLLMDYAGNATAVFLLPDDGKMQHLEQTLSKELISKFLLNRRRRLAQIHFPRLSISGEYNLKTLMSPLGITRIFNNGADLSGITEENAPLKLSQAVHKAVLTIDETGTEAAAVTVLQMVPMSMPPILRFDHPFLFIIFEEHTQSPIFLGKVVDPTHK.

The signal sequence occupies residues 1–24 (MTPSISWGLLLLAGLCCLVPSFLA). Residues asparagine 64, asparagine 101, and asparagine 265 are each glycosylated (N-linked (GlcNAc...) asparagine). Positions 368-387 (AVTVLQMVPMSMPPILRFDH) are RCL.

It belongs to the serpin family.

Its subcellular location is the secreted. Its function is as follows. Inhibitor of serine proteases. Its primary target is elastase, but it also has a moderate affinity for plasmin and thrombin. The sequence is that of Alpha-1-antitrypsin 1-1 (Serpina1a) from Mus musculus (Mouse).